The sequence spans 317 residues: Olfactory receptor 2G2 (317 aa).

Residues 1–28 (MGMVRHTNESNLAGFILLGFSDYPQLQK) lie on the Extracellular side of the membrane. Asparagine 8 carries N-linked (GlcNAc...) asparagine glycosylation. The chain crosses the membrane as a helical span at residues 29-52 (VLFVLILILYLLTILGNTTIILVS). Over 53-60 (RLEPKLHM) the chain is Cytoplasmic. Residues 61–82 (PMYFFLSHLSFLYRCFTSSVIP) traverse the membrane as a helical segment. The Extracellular segment spans residues 83–103 (QLLVNLWEPMKTIAYGGCLVH). A disulfide bridge links cysteine 100 with cysteine 192. The helical transmembrane segment at 104-123 (LYNSHALGSTECVLPAVMSC) threads the bilayer. Residues 124–142 (DRYVAVCRPLHYTVLMHIH) are Cytoplasmic-facing. The helical transmembrane segment at 143-161 (LCMALASMAWLSGIATTLV) threads the bilayer. The Extracellular portion of the chain corresponds to 162–198 (QSTLTLQLPFCGHRQVDHFICEVPVLIKLACVGTTFN). The helical transmembrane segment at 199 to 222 (EAELFVASILFLIVPVSFILVSSG) threads the bilayer. The Cytoplasmic portion of the chain corresponds to 223 to 239 (YIAHAVLRIKSATRRQK). A helical membrane pass occupies residues 240–262 (AFGTCFSHLTVVTIFYGTIIFMY). Residues 263 to 275 (LQPAKSRSRDQGK) lie on the Extracellular side of the membrane. A helical membrane pass occupies residues 276 to 295 (FVSLFYTVVTRMLNPLIYTL). Over 296 to 317 (RIKEVKGALKKVLAKALGVNIL) the chain is Cytoplasmic.

This sequence belongs to the G-protein coupled receptor 1 family.

It is found in the cell membrane. Its function is as follows. Odorant receptor. This chain is Olfactory receptor 2G2 (OR2G2), found in Homo sapiens (Human).